We begin with the raw amino-acid sequence, 336 residues long: Holliday junction branch migration complex subunit RuvB (336 aa).

The segment at 1-180 (MRRTGIRLSW…FGIVEHLEYY (180 aa)) is large ATPase domain (RuvB-L). ATP is bound by residues leucine 18, arginine 19, glycine 60, lysine 63, threonine 64, threonine 65, 127 to 129 (EDF), arginine 170, tyrosine 180, and arginine 217. Mg(2+) is bound at residue threonine 64. A small ATPAse domain (RuvB-S) region spans residues 181 to 251 (TPEELAQGVM…RALEALAALG (71 aa)). Residues 254–336 (ELGLEKRDRE…PPPVGPLLEP (83 aa)) are head domain (RuvB-H). DNA-binding residues include arginine 309 and arginine 314.

It belongs to the RuvB family. As to quaternary structure, homohexamer. Forms an RuvA(8)-RuvB(12)-Holliday junction (HJ) complex. HJ DNA is sandwiched between 2 RuvA tetramers; dsDNA enters through RuvA and exits via RuvB. An RuvB hexamer assembles on each DNA strand where it exits the tetramer. Each RuvB hexamer is contacted by two RuvA subunits (via domain III) on 2 adjacent RuvB subunits; this complex drives branch migration. In the full resolvosome a probable DNA-RuvA(4)-RuvB(12)-RuvC(2) complex forms which resolves the HJ.

Its subcellular location is the cytoplasm. The enzyme catalyses ATP + H2O = ADP + phosphate + H(+). In terms of biological role, the RuvA-RuvB-RuvC complex processes Holliday junction (HJ) DNA during genetic recombination and DNA repair, while the RuvA-RuvB complex plays an important role in the rescue of blocked DNA replication forks via replication fork reversal (RFR). RuvA specifically binds to HJ cruciform DNA, conferring on it an open structure. The RuvB hexamer acts as an ATP-dependent pump, pulling dsDNA into and through the RuvAB complex. RuvB forms 2 homohexamers on either side of HJ DNA bound by 1 or 2 RuvA tetramers; 4 subunits per hexamer contact DNA at a time. Coordinated motions by a converter formed by DNA-disengaged RuvB subunits stimulates ATP hydrolysis and nucleotide exchange. Immobilization of the converter enables RuvB to convert the ATP-contained energy into a lever motion, pulling 2 nucleotides of DNA out of the RuvA tetramer per ATP hydrolyzed, thus driving DNA branch migration. The RuvB motors rotate together with the DNA substrate, which together with the progressing nucleotide cycle form the mechanistic basis for DNA recombination by continuous HJ branch migration. Branch migration allows RuvC to scan DNA until it finds its consensus sequence, where it cleaves and resolves cruciform DNA. In Thermus thermophilus (strain ATCC BAA-163 / DSM 7039 / HB27), this protein is Holliday junction branch migration complex subunit RuvB.